The primary structure comprises 374 residues: tRNA-specific 2-thiouridylase MnmA (374 aa).

ATP contacts are provided by residues 15-22 and Met41; that span reads GMSGGVDS. Positions 101–103 are interaction with target base in tRNA; sequence NPD. Residue Cys106 is the Nucleophile of the active site. The cysteines at positions 106 and 203 are disulfide-linked. Gly130 contacts ATP. An interaction with tRNA region spans residues 153-155; that stretch reads KDQ. The Cysteine persulfide intermediate role is filled by Cys203. The tract at residues 311–312 is interaction with tRNA; sequence RY.

It belongs to the MnmA/TRMU family.

Its subcellular location is the cytoplasm. The enzyme catalyses S-sulfanyl-L-cysteinyl-[protein] + uridine(34) in tRNA + AH2 + ATP = 2-thiouridine(34) in tRNA + L-cysteinyl-[protein] + A + AMP + diphosphate + H(+). Functionally, catalyzes the 2-thiolation of uridine at the wobble position (U34) of tRNA, leading to the formation of s(2)U34. In Lysinibacillus sphaericus (strain C3-41), this protein is tRNA-specific 2-thiouridylase MnmA.